A 323-amino-acid chain; its full sequence is MSSKQHCVKLNDGHLIPALGFGTYKPKEVPKSKSLEAACLALDVGYRHVDTAYAYQVEEEIGQAIQSKIKAGVVKREDLFITTKLWCTCFRPELVKPALEKSLKKLQLDYVDLYIMHYPVPMKSGDNDFPVNEQGKSLLDTVDFCDTWERLEECKDAGLVKSIGVSNFNHRQLERILNKPGLKYKPVCNQVECHLYLNQRKLLDYCESKDIVLVAYGALGTQRYKEWVDQNSPVLLNDPVLCDVAKKNKRSPALIALRYLIQRGIVPLAQSFKENEMRENLQVFGFQLSPEDMKTLDGLNKNFRYLPAEFLVDHPEYPFVEEY.

NAD(+) contacts are provided by residues 20–24, aspartate 50, and tyrosine 55; that span reads GFGTY. Tyrosine 55 acts as the Proton donor in catalysis. Histidine 117 provides a ligand contact to substrate. Residues 166–167, glutamine 190, 216–224, and 270–280 contribute to the NAD(+) site; these read SN, YGALGTQRY, and QSFKENEMREN.

This sequence belongs to the aldo/keto reductase family.

Functionally, catalyzes the dehydrogenation of 17-beta-hydroxysteroids. May also exhibit significant activity with a variety of cyclic and alicyclic alcohols. Uses both NAD and NADP, but the activity is much greater with NAD than with NADP. The sequence is that of Aldo-keto reductase family 1 member C13 (Akr1c13) from Mus musculus (Mouse).